A 353-amino-acid chain; its full sequence is 2-Hydroxyacid oxidase 2 (353 aa).

An FMN hydroxy acid dehydrogenase domain is found at 2–353 (PLVCLADFKA…SPDLIQFSRL (352 aa)). FMN contacts are provided by residues 77 to 79 (PTA), S106, and Q128. A 2-oxocarboxylate is bound at residue Y130. Phosphoserine is present on S133. T156 is a binding site for FMN. An a 2-oxocarboxylate-binding site is contributed by R165. Residue K224 participates in FMN binding. H248 (proton acceptor) is an active-site residue. A 2-oxocarboxylate is bound at residue R251. Residues 279–283 (DGGVR) and 302–303 (GR) each bind FMN. A Microbody targeting signal motif is present at residues 351 to 353 (SRL).

This sequence belongs to the FMN-dependent alpha-hydroxy acid dehydrogenase family. Homotetramer. Could also form homooctamer. FMN is required as a cofactor. As to expression, expressed in kidney.

It localises to the peroxisome. The enzyme catalyses a (2S)-2-hydroxycarboxylate + O2 = a 2-oxocarboxylate + H2O2. It catalyses the reaction 2-hydroxyoctanoate + O2 = 2-oxooctanoate + H2O2. The catalysed reaction is 2-hydroxyhexadecanoate + O2 = 2-oxohexadecanoate + H2O2. It carries out the reaction 2-hydroxyhexanoate + O2 = 2-oxohexanoate + H2O2. The enzyme catalyses mandelate + O2 = phenylglyoxylate + H2O2. With respect to regulation, is inhibited in vitro by CCPST (4-carboxy-5-(4-chlorophenyl)sulfanyl-1,2,3-thiadiazole). Functionally, oxidase that catalyzes the oxidation of medium and long chain hydroxyacids such as 2-hydroxyhexadecanoate, 2-hydroxyoctanoate, 2-hydroxyhexanoate and 2-hydroxybutanoate, to the correspondong 2-oxoacids. Its role in the oxidation of 2-hydroxy fatty acids may contribute to the general pathway of fatty acid alpha-oxidation. Can also use mandelate as substrate. Active in vitro with the artificial electron acceptor 2,6-dichlorophenolindophenol (DCIP), but O2 is believed to be the physiological electron acceptor, leading to the production of H2O2. This chain is 2-Hydroxyacid oxidase 2 (Hao2), found in Rattus norvegicus (Rat).